A 163-amino-acid chain; its full sequence is Transcription elongation factor GreA (163 aa).

The stretch at 45 to 65 forms a coiled coil; it reads NAEYHAAREKQAFIEARINEL.

Belongs to the GreA/GreB family.

Functionally, necessary for efficient RNA polymerase transcription elongation past template-encoded arresting sites. The arresting sites in DNA have the property of trapping a certain fraction of elongating RNA polymerases that pass through, resulting in locked ternary complexes. Cleavage of the nascent transcript by cleavage factors such as GreA or GreB allows the resumption of elongation from the new 3'terminus. GreA releases sequences of 2 to 3 nucleotides. This is Transcription elongation factor GreA from Helicobacter hepaticus (strain ATCC 51449 / 3B1).